The primary structure comprises 540 residues: Phosphoenolpyruvate carboxykinase (ATP) (540 aa).

A substrate-binding site is contributed by Arg65. Position 87 is an N6-acetyllysine (Lys87). Tyr207 and Lys213 together coordinate substrate. ATP contacts are provided by residues Lys213, His232, and 248–256 (GLSGTGKTT). Residues Lys213 and His232 each coordinate Mn(2+). Position 269 (Asp269) interacts with Mn(2+). ATP is bound by residues Glu297, Arg333, 449–450 (RI), and Thr455. Arg333 lines the substrate pocket. Lys523 bears the N6-acetyllysine mark.

The protein belongs to the phosphoenolpyruvate carboxykinase (ATP) family. Monomer. The cofactor is Mn(2+).

The protein resides in the cytoplasm. The enzyme catalyses oxaloacetate + ATP = phosphoenolpyruvate + ADP + CO2. The protein operates within carbohydrate biosynthesis; gluconeogenesis. Involved in the gluconeogenesis. Catalyzes the conversion of oxaloacetate (OAA) to phosphoenolpyruvate (PEP) through direct phosphoryl transfer between the nucleoside triphosphate and OAA. The chain is Phosphoenolpyruvate carboxykinase (ATP) from Shigella flexneri.